The chain runs to 870 residues: Histidine biosynthesis trifunctional protein (870 aa).

Positions 1–285 (METTLPLPFL…KFVVKQKGRF (285 aa)) are phosphoribosyl-AMP cyclohydrolase. Residues 286–367 (CHLDQSGCFG…FYFALTRAVA (82 aa)) are phosphoribosyl-ATP pyrophosphohydrolase. The tract at residues 368–870 (AGVTLADIER…IRLEHMSKSN (503 aa)) is histidinol dehydrogenase. 2 residues coordinate Zn(2+): Gln693 and His696. Residues Glu762 and His763 contribute to the active site. Zn(2+)-binding residues include Asp796 and His855.

In the C-terminal section; belongs to the histidinol dehydrogenase family. The cofactor is Zn(2+).

It catalyses the reaction 1-(5-phospho-beta-D-ribosyl)-5'-AMP + H2O = 1-(5-phospho-beta-D-ribosyl)-5-[(5-phospho-beta-D-ribosylamino)methylideneamino]imidazole-4-carboxamide. It carries out the reaction 1-(5-phospho-beta-D-ribosyl)-ATP + H2O = 1-(5-phospho-beta-D-ribosyl)-5'-AMP + diphosphate + H(+). The enzyme catalyses L-histidinol + 2 NAD(+) + H2O = L-histidine + 2 NADH + 3 H(+). Its pathway is amino-acid biosynthesis; L-histidine biosynthesis; L-histidine from 5-phospho-alpha-D-ribose 1-diphosphate: step 2/9. It functions in the pathway amino-acid biosynthesis; L-histidine biosynthesis; L-histidine from 5-phospho-alpha-D-ribose 1-diphosphate: step 3/9. The protein operates within amino-acid biosynthesis; L-histidine biosynthesis; L-histidine from 5-phospho-alpha-D-ribose 1-diphosphate: step 9/9. The chain is Histidine biosynthesis trifunctional protein (his-3) from Neurospora crassa (strain ATCC 24698 / 74-OR23-1A / CBS 708.71 / DSM 1257 / FGSC 987).